The following is a 252-amino-acid chain: Ribonuclease 3 (252 aa).

An RNase III domain is found at 3 to 125 (LATLETRLDH…IFGAAFLDGG (123 aa)). Glu-38 serves as a coordination point for Mg(2+). The active site involves Asp-42. Mg(2+) contacts are provided by Asp-111 and Glu-114. Glu-114 is a catalytic residue. The DRBM domain occupies 152–222 (DAKTLLQEFL…AKLALEAAQA (71 aa)).

Belongs to the ribonuclease III family. In terms of assembly, homodimer. It depends on Mg(2+) as a cofactor.

The protein localises to the cytoplasm. The enzyme catalyses Endonucleolytic cleavage to 5'-phosphomonoester.. Digests double-stranded RNA. Involved in the processing of primary rRNA transcript to yield the immediate precursors to the large and small rRNAs (23S and 16S). Processes some mRNAs, and tRNAs when they are encoded in the rRNA operon. Processes pre-crRNA and tracrRNA of type II CRISPR loci if present in the organism. The protein is Ribonuclease 3 of Bordetella petrii (strain ATCC BAA-461 / DSM 12804 / CCUG 43448).